The primary structure comprises 272 residues: MPEFLTVVSWPFLILLSFQVRVVAGAPQPWHCAPCTAERLELCPPVPASCPEISRPAGCGCCPTCALPLGAACGVATARCAQGLSCRALPGEPRPLHALTRGQGACVLEPAAPATSSLSGSQHEEAKAAVASEDELAESPEMTEEQLLDSFHLMAPSREDQPILWNAISTYSSMRAREITDLKKWKEPCQRELYKVLERLAAAQQKAGDEIYKFYLPNCNKNGFYHSKQCETSLDGEAGLCWCVYPWSGKKIPGSLETRGDPNCHQYFNVQN.

A signal peptide spans 1–25 (MPEFLTVVSWPFLILLSFQVRVVAG). One can recognise an IGFBP N-terminal domain in the interval 28–109 (QPWHCAPCTA…TRGQGACVLE (82 aa)). 6 disulfide bridges follow: Cys32-Cys59, Cys35-Cys61, Cys43-Cys62, Cys50-Cys65, Cys73-Cys86, and Cys80-Cys106. The tract at residues 115–143 (TSSLSGSQHEEAKAAVASEDELAESPEMT) is disordered. Residues 132 to 143 (SEDELAESPEMT) show a composition bias toward acidic residues. 3 positions are modified to phosphoserine: Ser139, Ser157, and Ser169. Thr170 is subject to Phosphothreonine. Tyr171 carries the phosphotyrosine modification. Positions 186 to 264 (KEPCQRELYK…SLETRGDPNC (79 aa)) constitute a Thyroglobulin type-1 domain. Cystine bridges form between Cys189-Cys219, Cys230-Cys241, and Cys243-Cys264. The residue at position 255 (Ser255) is a Phosphoserine. Residues 259–261 (RGD) carry the Cell attachment site motif.

As to quaternary structure, binds equally well IGF1 and IGF2. Interacts with integrin ITGA5:ITGB1. Interacts with VHL; this interaction inhibits HIF1A degradation.

The protein localises to the secreted. Functionally, multifunctional protein that plays a critical role in regulating the availability of IGFs such as IGF1 and IGF2 to their receptors and thereby regulates IGF-mediated cellular processes including cell migration, proliferation, differentiation or apoptosis in a cell-type specific manner. Also plays a positive role in cell migration by interacting with integrin ITGA5:ITGB1 through its RGD motif. Mechanistically, binding to integrins leads to activation of focal adhesion kinase/PTK2 and stimulation of the mitogen-activated protein kinase (MAPK) pathway. Regulates cardiomyocyte apoptosis by suppressing HIF-1alpha/HIF1A ubiquitination and subsequent degradation. The chain is Insulin-like growth factor-binding protein 1 (Igfbp1) from Rattus norvegicus (Rat).